The primary structure comprises 410 residues: Sprouty-related, EVH1 domain-containing protein 2 (410 aa).

The WH1 domain maps to 5-122; that stretch reads THPDDDSYIV…RGVRKAIEDL (118 aa). The disordered stretch occupies residues 127–171; it reads TTSSSTIHNEAELGDDDVFTTATDSSSNSSQKREPNTRTISSPTS. Positions 146–156 are enriched in polar residues; it reads TTATDSSSNSS. The 56-residue stretch at 197–252 folds into the KBD domain; the sequence is SYPQVTFPEDDEEIVRINPREKIWMTGYEDYRHAPVRGKYLDSTEDADSYVRFAKG. A phosphotyrosine mark is found at Tyr-224 and Tyr-227. Residues 274–294 are disordered; sequence DPKGNVIKTQPPRAKSRRRKE. Residues 300-408 enclose the SPR domain; the sequence is RCVYCRDMFN…CRCCGGKHKA (109 aa).

As to quaternary structure, homodimer and heterodimer. Able to interact with SPRED1 to form heterodimers. Interacts with RAS. May interact with ZDHHC13 (via ANK repeats) and ZDHHC17 (via ANK repeats). Interacts with TESK1. Interacts with NF1. Phosphorylated on serine and threonine residues. Phosphorylated on tyrosine. Phosphorylation of Tyr-224 and Tyr-227 are required for ubiquitination. Post-translationally, ubiquitinated; leading to degradation by the proteasome. In terms of tissue distribution, expressed in the eye, with higher expression in lens epithelium than in lens fiber cells at postnatal day 15.

It localises to the cell membrane. The protein localises to the cytoplasmic vesicle. Its subcellular location is the secretory vesicle membrane. The protein resides in the cytoplasm. Negatively regulates Ras signaling pathways and downstream activation of MAP kinases. Recruits and translocates NF1 to the cell membrane, thereby enabling NF1-dependent hydrolysis of active GTP-bound Ras to inactive GDP-bound Ras. Inhibits fibroblast growth factor (FGF)-induced retinal lens fiber differentiation, probably by inhibiting FGF-mediated phosphorylation of ERK1/2. Inhibits TGFB-induced epithelial-to-mesenchymal transition in lens epithelial cells. The protein is Sprouty-related, EVH1 domain-containing protein 2 (Spred2) of Rattus norvegicus (Rat).